Here is a 375-residue protein sequence, read N- to C-terminus: Alcohol dehydrogenase 1C (375 aa).

At serine 2 the chain carries N-acetylserine. Serine 23 is subject to Phosphoserine. 7 residues coordinate Zn(2+): cysteine 47, histidine 68, cysteine 98, cysteine 101, cysteine 104, cysteine 112, and cysteine 175. NAD(+)-binding positions include 200 to 205, aspartate 224, lysine 229, isoleucine 270, 293 to 295, 318 to 320, and arginine 370; these read GLGGVG, VGV, and AIF.

The protein belongs to the zinc-containing alcohol dehydrogenase family. In terms of assembly, dimer of identical or non-identical chains of class I alcohol dehydrogenase: ADH1A, ADH1B, and ADH1C. Requires Zn(2+) as cofactor. As to expression, expressed in kidney.

It is found in the cytoplasm. It catalyses the reaction a primary alcohol + NAD(+) = an aldehyde + NADH + H(+). The enzyme catalyses ethanol + NAD(+) = acetaldehyde + NADH + H(+). Functionally, alcohol dehydrogenase. Exhibits high activity for ethanol oxidation and plays a major role in ethanol catabolism. The sequence is that of Alcohol dehydrogenase 1C (ADH1C) from Papio hamadryas (Hamadryas baboon).